Reading from the N-terminus, the 528-residue chain is Zinc finger protein 16-like (528 aa).

The segment at 1 to 28 is disordered; sequence MSRKRNHCYMETGASSESQGAFVDSAGP. The stretch at 79–106 forms a coiled coil; it reads IRVLKMELREKSDEIELLKAKLESAEKD. Disordered regions lie at residues 159-202 and 232-293; these read GAAE…TDAE and FKGD…DRME. The span at 232 to 242 shows a compositional bias: basic and acidic residues; it reads FKGDSETKCED. Acidic residues predominate over residues 244–256; sequence PPMDEEDENEDSE. Basic and acidic residues-rich tracts occupy residues 257–270 and 278–293; these read EGRG…DHFP and GEDR…DRME. The C2H2-type 1 zinc finger occupies 303–326; it reads FICPFCGTLCPDSSFLEEHIKLMH. The span at 333-345 shows a compositional bias: low complexity; it reads QSTSAGSSSQAEG. Positions 333-359 are disordered; sequence QSTSAGSSSQAEGDSGEAGPASRGARE. 4 C2H2-type zinc fingers span residues 366–388, 394–416, 423–445, and 451–473; these read YECG…QRIH, FVCP…RLSH, FPCP…QRVH, and YACP…MRIH. The C2H2-type 6; degenerate zinc finger occupies 479–501; sequence YTCYQCGRSFRHLGTYKSHRCMP. Residues 502-528 are disordered; sequence ATQMPSEHSPPWAQEDKVQTGRLQGYV.

The protein belongs to the krueppel C2H2-type zinc-finger protein family.

Its subcellular location is the nucleus. Functionally, probable transcription factor. Important for development and migration of oligodendrocyte precursor cells, and normal myelination of axons in the central nervous system (CNS). Functions autonomously in oligodendrocytes to promote CNS myelination. Seems to act in parallel with notch3 during oligodendrocyte development. The chain is Zinc finger protein 16-like from Danio rerio (Zebrafish).